A 146-amino-acid polypeptide reads, in one-letter code: 3-dehydroquinate dehydratase (146 aa).

Tyrosine 22 functions as the Proton acceptor in the catalytic mechanism. Positions 73, 79, and 86 each coordinate substrate. The active-site Proton donor is histidine 99. Residues leucine 100–serine 101 and arginine 110 each bind substrate.

This sequence belongs to the type-II 3-dehydroquinase family. Homododecamer.

It catalyses the reaction 3-dehydroquinate = 3-dehydroshikimate + H2O. It functions in the pathway metabolic intermediate biosynthesis; chorismate biosynthesis; chorismate from D-erythrose 4-phosphate and phosphoenolpyruvate: step 3/7. Functionally, catalyzes a trans-dehydration via an enolate intermediate. In Parasynechococcus marenigrum (strain WH8102), this protein is 3-dehydroquinate dehydratase.